A 314-amino-acid polypeptide reads, in one-letter code: DNA-directed RNA polymerase subunit alpha (314 aa).

An alpha N-terminal domain (alpha-NTD) region spans residues 1 to 228 (MIEIEKPVIE…EHLNIFVGLT (228 aa)). Positions 245–314 (KEKVLEMTIE…ELGLGLRKEE (70 aa)) are alpha C-terminal domain (alpha-CTD).

Belongs to the RNA polymerase alpha chain family. Homodimer. The RNAP catalytic core consists of 2 alpha, 1 beta, 1 beta' and 1 omega subunit. When a sigma factor is associated with the core the holoenzyme is formed, which can initiate transcription.

It catalyses the reaction RNA(n) + a ribonucleoside 5'-triphosphate = RNA(n+1) + diphosphate. In terms of biological role, DNA-dependent RNA polymerase catalyzes the transcription of DNA into RNA using the four ribonucleoside triphosphates as substrates. The polypeptide is DNA-directed RNA polymerase subunit alpha (Halalkalibacterium halodurans (strain ATCC BAA-125 / DSM 18197 / FERM 7344 / JCM 9153 / C-125) (Bacillus halodurans)).